The following is a 1250-amino-acid chain: Bifunctional autolysin (1250 aa).

An N-terminal signal peptide occupies residues 1-29 (MAKKFNYKLPSMVALTLVGSAVTAHQVQA). Polar residues predominate over residues 103 to 138 (GDTRANQSATTNNTQPVAKSTSTTAPKTNTNVTNAG). Disordered regions lie at residues 103 to 151 (GDTR…NSEN) and 173 to 219 (AAAP…KYKP). Residues 173 to 196 (AAAPKAATTSAPKAKTEATPKVTT) show a composition bias toward low complexity. Residues 199-769 (ASAQPRSVAA…AVAQPKTAVK (571 aa)) form an N-acetylmuramoyl-L-alanine amidase region. GW domains are found at residues 437-511 (TVAA…YNTA), 513-587 (SPVN…DTAK), 606-680 (TVSS…YNNA), 682-756 (SPVN…VPAA), 778-853 (TTQT…VQNL), 855-930 (KEVK…APTA), and 937-1011 (AAKD…KELI). Positions 770 to 1250 (AYTVTKPQTT…GKYFDIPQYK (481 aa)) are endo-beta-N-acetylglucosaminidase.

In the N-terminal section; belongs to the N-acetylmuramoyl-L-alanine amidase 2 family. It in the C-terminal section; belongs to the glycosyl hydrolase 73 family. As to quaternary structure, oligomer; forms a ring structure at the cell surface which is important for efficient partitioning of daughter cells after cell division. Post-translationally, undergoes proteolytic processing to generate the two extracellular lytic enzymes, probably at the septal region on the cell surface.

It is found in the secreted. The catalysed reaction is Hydrolyzes the link between N-acetylmuramoyl residues and L-amino acid residues in certain cell-wall glycopeptides.. The enzyme catalyses an N(4)-(oligosaccharide-(1-&gt;3)-[oligosaccharide-(1-&gt;6)]-beta-D-Man-(1-&gt;4)-beta-D-GlcNAc-(1-&gt;4)-alpha-D-GlcNAc)-L-asparaginyl-[protein] + H2O = an oligosaccharide-(1-&gt;3)-[oligosaccharide-(1-&gt;6)]-beta-D-Man-(1-&gt;4)-D-GlcNAc + N(4)-(N-acetyl-beta-D-glucosaminyl)-L-asparaginyl-[protein]. Functionally, endohydrolysis of the di-N-acetylchitobiosyl unit in high-mannose glycopeptides and glycoproteins containing the -[(Man)5(GlcNAc)2]-Asn structure. One N-acetyl-D-glucosamine residue remains attached to the protein; the rest of the oligosaccharide is released intact. Cleaves the peptidoglycan connecting the daughter cells at the end of the cell division cycle, resulting in the separation of the two newly divided cells. Acts as an autolysin in penicillin-induced lysis. This Staphylococcus aureus (strain MSSA476) protein is Bifunctional autolysin (atl).